Here is a 105-residue protein sequence, read N- to C-terminus: UPF0148 protein PH0795 (105 aa).

Belongs to the UPF0148 family.

The protein is UPF0148 protein PH0795 of Pyrococcus horikoshii (strain ATCC 700860 / DSM 12428 / JCM 9974 / NBRC 100139 / OT-3).